The sequence spans 500 residues: Cysteine--tRNA ligase (500 aa).

A Zn(2+)-binding site is contributed by cysteine 30. Residues 32-42 (PTVYDYAHIGN) carry the 'HIGH' region motif. Positions 224, 263, and 267 each coordinate Zn(2+). The 'KMSKS' region motif lies at 296–300 (KMSKS). Lysine 299 serves as a coordination point for ATP.

It belongs to the class-I aminoacyl-tRNA synthetase family. Monomer. It depends on Zn(2+) as a cofactor.

The protein resides in the cytoplasm. The catalysed reaction is tRNA(Cys) + L-cysteine + ATP = L-cysteinyl-tRNA(Cys) + AMP + diphosphate. The sequence is that of Cysteine--tRNA ligase from Bartonella bacilliformis (strain ATCC 35685 / KC583 / Herrer 020/F12,63).